The primary structure comprises 123 residues: Large ribosomal subunit protein bL17 (123 aa).

This sequence belongs to the bacterial ribosomal protein bL17 family. In terms of assembly, part of the 50S ribosomal subunit. Contacts protein L32.

This is Large ribosomal subunit protein bL17 from Borrelia hermsii (strain HS1 / DAH).